We begin with the raw amino-acid sequence, 56 residues long: Large ribosomal subunit protein bL32 (56 aa).

Residues 1-37 form a disordered region; that stretch reads MAVQQNKKSRSKRGMRRSHDALSTAQLSVDATSGELH. Over residues 7 to 16 the composition is skewed to basic residues; sequence KKSRSKRGMR. Residues 21–31 are compositionally biased toward polar residues; sequence ALSTAQLSVDA.

The protein belongs to the bacterial ribosomal protein bL32 family.

The chain is Large ribosomal subunit protein bL32 from Shewanella loihica (strain ATCC BAA-1088 / PV-4).